A 249-amino-acid polypeptide reads, in one-letter code: tRNA pseudouridine synthase A (249 aa).

Catalysis depends on aspartate 53, which acts as the Nucleophile. Position 111 (tyrosine 111) interacts with substrate.

This sequence belongs to the tRNA pseudouridine synthase TruA family. Homodimer.

It carries out the reaction uridine(38/39/40) in tRNA = pseudouridine(38/39/40) in tRNA. Its function is as follows. Formation of pseudouridine at positions 38, 39 and 40 in the anticodon stem and loop of transfer RNAs. The chain is tRNA pseudouridine synthase A from Streptococcus equi subsp. equi (strain 4047).